The sequence spans 315 residues: Lipase 3 (315 aa).

Positions 1–18 are cleaved as a signal peptide; that stretch reads MLLKRLGLAALFSLSMVG. Cys-19 carries the N-palmitoyl cysteine lipid modification. The S-diacylglycerol cysteine moiety is linked to residue Cys-19. The region spanning 69–296 is the AB hydrolase-1 domain; sequence PLLLIHGFGG…MNDVGHVPMV (228 aa). His-74 is an active-site residue. Ser-142 functions as the Charge relay system in the catalytic mechanism.

The protein belongs to the lipase/esterase LIP3/BchO family.

The protein resides in the cell membrane. It catalyses the reaction a triacylglycerol + H2O = a diacylglycerol + a fatty acid + H(+). This Moraxella sp. (strain TA144) protein is Lipase 3 (lip3).